The following is a 184-amino-acid chain: Photosystem I assembly protein Ycf4 (184 aa).

A run of 2 helical transmembrane segments spans residues 19 to 39 and 57 to 77; these read ISNF…LLVG and IIFF…LFIS.

The protein belongs to the Ycf4 family.

It is found in the plastid. The protein localises to the chloroplast thylakoid membrane. Its function is as follows. Seems to be required for the assembly of the photosystem I complex. The sequence is that of Photosystem I assembly protein Ycf4 from Solanum bulbocastanum (Wild potato).